The sequence spans 288 residues: Elongation factor Ts (288 aa).

Positions 80–83 (TDFL) are involved in Mg(2+) ion dislocation from EF-Tu.

This sequence belongs to the EF-Ts family.

It is found in the cytoplasm. Associates with the EF-Tu.GDP complex and induces the exchange of GDP to GTP. It remains bound to the aminoacyl-tRNA.EF-Tu.GTP complex up to the GTP hydrolysis stage on the ribosome. The protein is Elongation factor Ts of Pseudomonas fluorescens (strain ATCC BAA-477 / NRRL B-23932 / Pf-5).